The primary structure comprises 468 residues: Alcohol dehydrogenase (quinone), cytochrome c subunit (468 aa).

Positions 1 to 23 (MINRLKVTFSAAAFSLLAGTALA) are cleaved as a signal peptide. Cytochrome c domains are found at residues 31–134 (ALVQ…MHGV), 178–293 (PEIA…KSLP), and 317–407 (TASV…RTSW). Residues C45, C48, H49, C193, C196, H197, C330, C333, and H334 each coordinate heme c.

As to quaternary structure, the alcohol dehydrogenase multicomponent enzyme system is composed of a dehydrogenase subunit I (AdhA) and a cytochrome c subunit II (AdhB). Heme c is required as a cofactor.

It localises to the cell membrane. It catalyses the reaction ethanol + a ubiquinone = a ubiquinol + acetaldehyde. Functionally, cytochrome c component of the alcohol dehydrogenase multicomponent enzyme system which is involved in the production of acetic acid and in the ethanol oxidase respiratory chain. Quinohemoprotein alcohol dehydrogenase (ADH) catalyzes the oxidation of ethanol to acetaldehyde by transferring electrons to the ubiquinone embedded in the membrane phospholipids. The electrons transfer from ethanol to membranous ubiquinone occurs from pyrroloquinoline quinone (PQQ) to one heme c in subunit I (AdhA), and finally to two heme c in subunit II (AdhB). Besides ubiquinone reduction, ADH also has a ubiquinol (QH2) oxidation reaction which mediates electron transfer from ubiquinol to the non-energy generating bypass oxidase system. The electrons transfer occurs from ubiquinol (QH2) to the additional heme c within subunit II (AdhB). The protein is Alcohol dehydrogenase (quinone), cytochrome c subunit of Gluconacetobacter polyoxogenes (Acetobacter polyoxogenes).